The sequence spans 113 residues: uncharacterized protein (113 aa).

The signal sequence occupies residues M1 to A20.

This is an uncharacterized protein from Escherichia coli (strain K12).